Reading from the N-terminus, the 300-residue chain is Cation-efflux pump FieF (300 aa).

4 helical membrane passes run 11–31 (LAAVSATAVALVLFIMKVFAW), 40–60 (LASLVDSLVDIAASLVNLLVV), 81–101 (LAALAQSMFISGSALFLILTG), and 114–134 (PEVGMWVTLIALVATLLLVSF). D45 and D49 together coordinate Zn(2+). H153 and D157 together coordinate Zn(2+). 2 helical membrane-spanning segments follow: residues 156 to 176 (SDLLMNGAILVALALSWKGIT) and 182 to 202 (FALGIGGYILYSALRMGYDAV).

It belongs to the cation diffusion facilitator (CDF) transporter (TC 2.A.4) family. FieF subfamily. As to quaternary structure, homodimer.

The protein localises to the cell inner membrane. The catalysed reaction is Zn(2+)(in) + H(+)(out) = Zn(2+)(out) + H(+)(in). The enzyme catalyses Cd(2+)(in) + H(+)(out) = Cd(2+)(out) + H(+)(in). It carries out the reaction Fe(2+)(in) + H(+)(out) = Fe(2+)(out) + H(+)(in). Functionally, divalent metal cation transporter which exports Zn(2+), Cd(2+) and possibly Fe(2+). May be involved in zinc and iron detoxification by efflux. The polypeptide is Cation-efflux pump FieF (Pectobacterium carotovorum subsp. carotovorum (strain PC1)).